Reading from the N-terminus, the 468-residue chain is O-methyltransferase lcsG (468 aa).

Positions 1 to 12 (MGDNVQSDTTAA) are enriched in polar residues. The disordered stretch occupies residues 1–29 (MGDNVQSDTTAAQAGITDAPTAPTSAPVS). Residues 298 to 299 (GG), Asp-321, 348 to 349 (DF), and Lys-363 contribute to the S-adenosyl-L-methionine site.

The protein belongs to the class I-like SAM-binding methyltransferase superfamily. Cation-independent O-methyltransferase family.

It participates in secondary metabolite biosynthesis. Functionally, O-methyltransferase; part of the gene cluster that mediates the biosynthesis of the lipopeptide antibiotics leucinostatins that show extensive biological activities, including antimalarial, antiviral, antibacterial, antifungal, and antitumor activities, as well as phytotoxic. Leucinostatin A contains nine amino acid residues, including the unusual amino acid 4-methyl-L-proline (MePro), 2-amino-6-hydroxy-4-methyl-8-oxodecanoic acid (AHyMeOA), 3-hydroxyleucine (HyLeu), alpha-aminoisobutyric acid (AIB), beta-Ala, a 4-methylhex-2-enoic acid at the N-terminus as well as a N1,N1-dimethylpropane-1,2-diamine (DPD) at the C-terminus. The biosynthesis of leucinostatins is probably initiated with the assembly of 4-methylhex-2-enoic acid by a reducing PKS. Two reducing polyketide synthases, lcsB and lcsC, have been identified in the cluster and it is not clear which is the one that assembles 4-methylhex-2-enoic acid since both contain KS, AT, DH, cMT, ER, KR and ACP domains. The polyketide residue might be transferred to the NRPS lcsA, mediated by two additional enzymes, the acyl-CoA ligase lcsD and the thioesterase lcsE. The linear polyketide carboxylic acid, which is released from PKS, is converted to a CoA thioester by lcsD, and then lcsE hydrolyzes the thiol bond and shuttles the polyketide intermediate to lcsA. The C domain of the first module catalyzed the condensation of 4-methylhex-2-enoic acid and MePro carried by domain A1, followed by successive condensations of nine amino acids to trigger the elongation of the linear peptide. A5 and A6 domains of lcsA are proposed to incorporate leucine, A2 AHyMeOA, and A3 incorporates HyLeu. A4, A7 and A8 incorporate AIB. The AHyMeOA in leucinostatin A activated by the A2 might be produced by the second PKS (lcsB or lcsC) present within the cluster. The MePro is probably produced via leucine cyclization and may originate from a separate pathway, independent of the cluster. Another nonproteinogenic amino acid, beta-Ala, could be produced by an aspartic acid decarboxylase also localized outside of the cluster. Two candidates are VFPBJ_01400 and VFPBJ_10476. The final peptide scaffold may be released by the NAD(P)H-dependent thioester reductase (TE) at the C-terminal region of lcsA. Transamination of the lcsA product by the transaminase lcsP may produce DPD at the C-terminus. Further hydroxylation steps performed alternatively by the cytochrome P450 monooxygenases lcsI, lcsK and lcsN then yield the non-methylated leucinostatins precursor. It is also possible that leucines can be hydroxylated prior to their incorporation into the peptide. Varying extents of methylation then lead to the formation of leucinostatins A and B. The protein is O-methyltransferase lcsG of Purpureocillium lilacinum (Paecilomyces lilacinus).